The sequence spans 341 residues: Adhesion protein Bd37 (341 aa).

The N-terminal stretch at 1–21 (MKTSKILNTAAICLLAMGFNG) is a signal peptide. N-linked (GlcNAc...) asparagine glycosylation is found at N23 and N30. C26 and C307 are oxidised to a cystine. The tract at residues 36–75 (AAANPVVSTPGNDAQQAGTQQGGANSKSVPEQQPQQAAGE) is disordered. The span at 49–59 (AQQAGTQQGGA) shows a compositional bias: low complexity. Residues 60-75 (NSKSVPEQQPQQAAGE) show a composition bias toward polar residues. A lipid anchor (GPI-anchor amidated serine) is attached at S311. The propeptide at 312–341 (GQGSSPKKPSFAAVPSSLSAIVFGIIVSMF) is removed in mature form.

The signal sequence is cleaved. Post-translationally, glycosylated. In terms of processing, palmitoylated. Not myristoylated.

It is found in the cell membrane. Its subcellular location is the secreted. The protein resides in the vesicle. In terms of biological role, binds to host erythrocytes. The protein is Adhesion protein Bd37 of Babesia divergens.